A 186-amino-acid chain; its full sequence is Tumor necrosis factor alpha-induced protein 8-like protein 2 (186 aa).

This sequence belongs to the TNFAIP8 family. TNFAIP8L2 subfamily.

In terms of biological role, acts as a negative regulator of innate and adaptive immunity by maintaining immune homeostasis. Negative regulator of Toll-like receptor and T-cell receptor function. Prevents hyperresponsiveness of the immune system and maintains immune homeostasis. Inhibits jun/ap1 and NF-kappa-B activation. Promotes Fas-induced apoptosis. This chain is Tumor necrosis factor alpha-induced protein 8-like protein 2 (tnfaip8l2), found in Xenopus laevis (African clawed frog).